We begin with the raw amino-acid sequence, 109 residues long: Cell division protein ZapA (109 aa).

A coiled-coil region spans residues 21–97; it reads PEQQEALNQA…QTIEQALVEQ (77 aa).

This sequence belongs to the ZapA family. Type 1 subfamily. As to quaternary structure, homodimer. Interacts with FtsZ.

The protein localises to the cytoplasm. In terms of biological role, activator of cell division through the inhibition of FtsZ GTPase activity, therefore promoting FtsZ assembly into bundles of protofilaments necessary for the formation of the division Z ring. It is recruited early at mid-cell but it is not essential for cell division. This Sodalis glossinidius (strain morsitans) protein is Cell division protein ZapA.